The primary structure comprises 420 residues: Diaminopimelate decarboxylase (420 aa).

Lys65 bears the N6-(pyridoxal phosphate)lysine mark. Residues Gly244 and 279 to 282 contribute to the pyridoxal 5'-phosphate site; that span reads EPGR. Substrate contacts are provided by Arg282, Arg318, and Tyr322. Residue Cys348 is the Proton donor of the active site. Substrate-binding residues include Glu349 and Tyr377. Tyr377 contacts pyridoxal 5'-phosphate.

The protein belongs to the Orn/Lys/Arg decarboxylase class-II family. LysA subfamily. Homodimer. It depends on pyridoxal 5'-phosphate as a cofactor.

The catalysed reaction is meso-2,6-diaminopimelate + H(+) = L-lysine + CO2. It functions in the pathway amino-acid biosynthesis; L-lysine biosynthesis via DAP pathway; L-lysine from DL-2,6-diaminopimelate: step 1/1. Functionally, specifically catalyzes the decarboxylation of meso-diaminopimelate (meso-DAP) to L-lysine. The sequence is that of Diaminopimelate decarboxylase (lysA) from Aquifex aeolicus (strain VF5).